Consider the following 29-residue polypeptide: Cytochrome b6-f complex subunit 8 (29 aa).

A helical transmembrane segment spans residues 3 to 23 (ILTLGWVSVLTLFTYSIAMVV).

The protein belongs to the PetN family. As to quaternary structure, the 4 large subunits of the cytochrome b6-f complex are cytochrome b6, subunit IV (17 kDa polypeptide, PetD), cytochrome f and the Rieske protein, while the 4 small subunits are PetG, PetL, PetM and PetN. The complex functions as a dimer.

It is found in the cellular thylakoid membrane. Its function is as follows. Component of the cytochrome b6-f complex, which mediates electron transfer between photosystem II (PSII) and photosystem I (PSI), cyclic electron flow around PSI, and state transitions. In Acaryochloris marina (strain MBIC 11017), this protein is Cytochrome b6-f complex subunit 8.